A 547-amino-acid polypeptide reads, in one-letter code: Chaperonin GroEL (547 aa).

ATP is bound by residues 30-33, Lys-51, 87-91, Gly-414, 478-480, and Asp-494; these read TLGP, DGTTT, and NAA.

The protein belongs to the chaperonin (HSP60) family. In terms of assembly, forms a cylinder of 14 subunits composed of two heptameric rings stacked back-to-back. Interacts with the co-chaperonin GroES.

Its subcellular location is the cytoplasm. It catalyses the reaction ATP + H2O + a folded polypeptide = ADP + phosphate + an unfolded polypeptide.. Its function is as follows. Together with its co-chaperonin GroES, plays an essential role in assisting protein folding. The GroEL-GroES system forms a nano-cage that allows encapsulation of the non-native substrate proteins and provides a physical environment optimized to promote and accelerate protein folding. This is Chaperonin GroEL from Klebsiella pneumoniae.